A 192-amino-acid polypeptide reads, in one-letter code: Phosphoheptose isomerase (192 aa).

One can recognise an SIS domain in the interval isoleucine 37–lysine 192. Asparagine 52 to glycine 54 serves as a coordination point for substrate. Histidine 61 and glutamate 65 together coordinate Zn(2+). Residues glutamate 65, asparagine 93–aspartate 94, serine 119–serine 121, serine 124, and glutamine 172 contribute to the substrate site. Zn(2+) is bound by residues glutamine 172 and histidine 180.

It belongs to the SIS family. GmhA subfamily. Homotetramer. Requires Zn(2+) as cofactor.

It is found in the cytoplasm. The enzyme catalyses 2 D-sedoheptulose 7-phosphate = D-glycero-alpha-D-manno-heptose 7-phosphate + D-glycero-beta-D-manno-heptose 7-phosphate. The protein operates within carbohydrate biosynthesis; D-glycero-D-manno-heptose 7-phosphate biosynthesis; D-glycero-alpha-D-manno-heptose 7-phosphate and D-glycero-beta-D-manno-heptose 7-phosphate from sedoheptulose 7-phosphate: step 1/1. Catalyzes the isomerization of sedoheptulose 7-phosphate in D-glycero-D-manno-heptose 7-phosphate. The chain is Phosphoheptose isomerase from Glaesserella parasuis serovar 5 (strain SH0165) (Haemophilus parasuis).